A 408-amino-acid polypeptide reads, in one-letter code: Argininosuccinate synthase (408 aa).

Residues 10–18 (AYSGGLDTS) and Ala-37 contribute to the ATP site. L-citrulline contacts are provided by Tyr-90 and Ser-95. Gly-120 serves as a coordination point for ATP. The L-aspartate site is built by Thr-122, Asn-126, and Asp-127. Residue Asn-126 participates in L-citrulline binding. L-citrulline is bound by residues Arg-130, Ser-181, Ser-190, Glu-266, and Tyr-278.

It belongs to the argininosuccinate synthase family. Type 1 subfamily. In terms of assembly, homotetramer.

The protein localises to the cytoplasm. It carries out the reaction L-citrulline + L-aspartate + ATP = 2-(N(omega)-L-arginino)succinate + AMP + diphosphate + H(+). The protein operates within amino-acid biosynthesis; L-arginine biosynthesis; L-arginine from L-ornithine and carbamoyl phosphate: step 2/3. In Cereibacter sphaeroides (strain ATCC 17025 / ATH 2.4.3) (Rhodobacter sphaeroides), this protein is Argininosuccinate synthase.